The following is an 86-amino-acid chain: Late effector protein 1 (86 aa).

Residues 1–24 (MRSHQMAAFFAVSLMMMVVLGALS) form the signal peptide.

It belongs to the lep1 family. Interacts at the cell wall with secreted rep1 repellent peptides.

The protein resides in the secreted. It localises to the cell wall. Functionally, core effector contributing to spore formation and tumor formation at the host plant. Modulates surface hydrophobicity promoting cell-cell or cell-surface contacts. Lep1 and rep1 interact in aerial hyphae to form a strong hydrophobic layer. Plays a crucial role in hyphal aggregation that might be a prerequisite for strong proliferation of diploid cells and for induction of the morphological changes associated with spore formation. This chain is Late effector protein 1, found in Mycosarcoma maydis (Corn smut fungus).